The sequence spans 71 residues: Phosphatidylinositol N-acetylglucosaminyltransferase subunit Y (71 aa).

Residue methionine 1 is a topological domain, cytoplasmic. A helical transmembrane segment spans residues 2–21 (FFSLPVLTVLIPLVSLTGLL). The Lumenal portion of the chain corresponds to 22–44 (YSASVEEDFPNGCTSTASLCFYS). Residues 45 to 65 (LLLPITLPVYVFFHLWTWMGL) traverse the membrane as a helical segment. Residues 66-71 (KLFRHN) lie on the Cytoplasmic side of the membrane.

In terms of assembly, component of the glycosylphosphatidylinositol-N-acetylglucosaminyltransferase (GPI-GnT) complex composed at least by PIGA, PIGC, PIGH, PIGP, PIGQ, PIGY and DPM2.

It is found in the endoplasmic reticulum membrane. It functions in the pathway glycolipid biosynthesis; glycosylphosphatidylinositol-anchor biosynthesis. Functionally, part of the glycosylphosphatidylinositol-N-acetylglucosaminyltransferase (GPI-GnT) complex that catalyzes the transfer of N-acetylglucosamine from UDP-N-acetylglucosamine to phosphatidylinositol and participates in the first step of GPI biosynthesis. May act by regulating the catalytic subunit PIGA. This Xenopus tropicalis (Western clawed frog) protein is Phosphatidylinositol N-acetylglucosaminyltransferase subunit Y.